The primary structure comprises 443 residues: Xaa-Pro dipeptidase (443 aa).

Positions 246, 257, 339, 384, and 423 each coordinate Mn(2+).

The protein belongs to the peptidase M24B family. Bacterial-type prolidase subfamily. Mn(2+) is required as a cofactor.

It catalyses the reaction Xaa-L-Pro dipeptide + H2O = an L-alpha-amino acid + L-proline. Splits dipeptides with a prolyl residue in the C-terminal position. The protein is Xaa-Pro dipeptidase of Escherichia coli O81 (strain ED1a).